We begin with the raw amino-acid sequence, 322 residues long: Peptidase 1 (322 aa).

Positions 1-18 (MKFVLAIASLLVLSVVYA) are cleaved as a signal peptide. Residues 19–99 (YPSEIRTFEE…LKKEFDLDAG (81 aa)) constitute a propeptide that is removed on maturation. Cys-131 and Cys-171 are joined by a disulfide. Cys-134 is a catalytic residue. Asn-152 is a glycosylation site (N-linked (GlcNAc...) asparagine). Catalysis depends on residues His-270 and Asn-290.

This sequence belongs to the peptidase C1 family. In terms of tissue distribution, expressed in the gut.

The protein localises to the secreted. The catalysed reaction is Broad endopeptidase specificity.. In terms of biological role, probable thiol protease. This Psoroptes ovis (Sheep scab mite) protein is Peptidase 1.